We begin with the raw amino-acid sequence, 839 residues long: Eukaryotic translation initiation factor 3 subunit C (839 aa).

The interval 1–93 (MSRFFVAGYN…DSDSEDEGRR (93 aa)) is disordered. 2 stretches are compositionally biased toward acidic residues: residues 14–27 (SSEE…DEEL) and 34–58 (GEQE…SDSD). A PCI domain is found at 585–759 (FHQHINLELL…AFIQFASTEP (175 aa)). The tract at residues 783–839 (EKTSSNGYGKKQPQQQQQQQQQQQQQQQQQKDLLQEDNSRFRYANVNTNNDEFQTTA) is disordered. Low complexity predominate over residues 794 to 812 (QPQQQQQQQQQQQQQQQQQ). Residues 827-839 (NVNTNNDEFQTTA) are compositionally biased toward polar residues.

Belongs to the eIF-3 subunit C family. Component of the eukaryotic translation initiation factor 3 (eIF-3) complex.

The protein localises to the cytoplasm. In terms of biological role, component of the eukaryotic translation initiation factor 3 (eIF-3) complex, which is involved in protein synthesis of a specialized repertoire of mRNAs and, together with other initiation factors, stimulates binding of mRNA and methionyl-tRNAi to the 40S ribosome. The eIF-3 complex specifically targets and initiates translation of a subset of mRNAs involved in cell proliferation. The polypeptide is Eukaryotic translation initiation factor 3 subunit C (Scheffersomyces stipitis (strain ATCC 58785 / CBS 6054 / NBRC 10063 / NRRL Y-11545) (Yeast)).